The following is a 371-amino-acid chain: Cytochrome b (371 aa).

The next 4 membrane-spanning stretches (helical) occupy residues 25-45 (FGSM…FLAV), 69-90 (WMMQ…YIHI), 105-125 (WLSG…GYVL), and 170-190 (FFAL…LHIM). Heme b contacts are provided by His-75 and His-89. Heme b is bound by residues His-174 and His-188. Position 193 (His-193) interacts with a ubiquinone. Helical transmembrane passes span 218–238 (YKDL…VSFL), 280–300 (LWGA…PFTH), 312–332 (IMQL…WAAT), and 339–358 (FTMI…IMNP).

This sequence belongs to the cytochrome b family. In terms of assembly, the cytochrome bc1 complex contains 3 respiratory subunits (MT-CYB, CYC1 and UQCRFS1), 2 core proteins (UQCRC1 and UQCRC2) and probably 6 low-molecular weight proteins. It depends on heme b as a cofactor.

Its subcellular location is the mitochondrion inner membrane. Functionally, component of the ubiquinol-cytochrome c reductase complex (complex III or cytochrome b-c1 complex) that is part of the mitochondrial respiratory chain. The b-c1 complex mediates electron transfer from ubiquinol to cytochrome c. Contributes to the generation of a proton gradient across the mitochondrial membrane that is then used for ATP synthesis. The polypeptide is Cytochrome b (MT-CYB) (Eryx miliaris nogaiorum (Black sand boa)).